A 92-amino-acid chain; its full sequence is Envelope glycoprotein J (92 aa).

Positions 1 to 22 (MDRYAVRTWGIVGILGCAAVGA) are cleaved as a signal peptide. Residues 23-49 (APTGPASDTTNATARLPTHPPLIRSGG) are Extracellular-facing. A glycan (N-linked (GlcNAc...) asparagine; by host) is linked at N33. A helical membrane pass occupies residues 50 to 70 (FAVPLIVGGLCLMILGMACLL). Over 71-92 (EVLRRLGRELARCCPHAGQFAP) the chain is Cytoplasmic.

It belongs to the alphaherpesvirinae glycoprotein J family.

It localises to the host Golgi apparatus membrane. It is found in the host endoplasmic reticulum membrane. Its subcellular location is the host endosome membrane. Functions as an activator of viral protein expression and virus production. In turn, promotes cell-to-cell spread as well as syncytia formation. The chain is Envelope glycoprotein J (gJ) from Homo sapiens (Human).